Reading from the N-terminus, the 247-residue chain is MPMAQMTQNPVFVAIDTTVVGDATTLAARLHDEVGGIKLGLEFFARNGHKGVKEVCRAGALPLFLDLKFHDIPNTVAGAVRAVMPLAPALLNVHACGGRAMMIAAREAAQSEALALGIAPPKMIAVTVLTSMDDDDLGGTGVAGGVLDQVRRLAALTRDAGLDGVVCSAREARVLRADLGDDFLLVTPGVRPLWSTTNDQKRVVTPQEAMAEGADVLVIGRPITGATDPAQAARLIAGEIVGWDVGI.

Substrate is bound by residues aspartate 16, lysine 38, 66–75, threonine 130, arginine 191, glutamine 200, glycine 220, and arginine 221; that span reads DLKFHDIPNT. The Proton donor role is filled by lysine 68.

It belongs to the OMP decarboxylase family. Type 1 subfamily. In terms of assembly, homodimer.

It catalyses the reaction orotidine 5'-phosphate + H(+) = UMP + CO2. The protein operates within pyrimidine metabolism; UMP biosynthesis via de novo pathway; UMP from orotate: step 2/2. Functionally, catalyzes the decarboxylation of orotidine 5'-monophosphate (OMP) to uridine 5'-monophosphate (UMP). This chain is Orotidine 5'-phosphate decarboxylase, found in Rhodospirillum rubrum (strain ATCC 11170 / ATH 1.1.1 / DSM 467 / LMG 4362 / NCIMB 8255 / S1).